Here is an 809-residue protein sequence, read N- to C-terminus: Plasminogen (809 aa).

The first 19 residues, 1-19 (MDHKEVVLLLLLFLKSGLG), serve as a signal peptide directing secretion. The PAN domain occupies 20 to 98 (DSLDDYVNTQ…RDVVLFEKRI (79 aa)). 24 cysteine pairs are disulfide-bonded: Cys-49/Cys-73, Cys-53/Cys-61, Cys-103/Cys-181, Cys-124/Cys-164, Cys-152/Cys-176, Cys-185/Cys-262, Cys-188/Cys-316, Cys-206/Cys-245, Cys-234/Cys-257, Cys-275/Cys-352, Cys-296/Cys-335, Cys-324/Cys-347, Cys-377/Cys-454, Cys-398/Cys-437, Cys-426/Cys-449, Cys-480/Cys-559, Cys-501/Cys-542, Cys-530/Cys-554, Cys-566/Cys-684, Cys-576/Cys-584, Cys-606/Cys-622, Cys-698/Cys-765, Cys-728/Cys-744, and Cys-755/Cys-783. Kringle domains lie at 103 to 181 (CKTG…IPEC) and 185 to 262 (CMHC…IPRC). A glycan (O-linked (GalNAc...) threonine) is linked at Thr-268. Kringle domains lie at 275–352 (CLKG…IPSC), 377–454 (CYRG…LKKC), and 480–559 (CMFG…VPQC). An N-linked (GlcNAc...) asparagine glycan is attached at Asn-308. One can recognise a Peptidase S1 domain in the interval 580-807 (VVGGCVSIPH…FVTWIEEIMR (228 aa)). The residue at position 596 (Ser-596) is a Phosphoserine. Catalysis depends on charge relay system residues His-621 and Asp-664. Ser-759 acts as the Charge relay system in catalysis.

Belongs to the peptidase S1 family. Plasminogen subfamily. Interacts with CSPG4 and AMOT. Interacts (via the Kringle domains) with HRG; the interaction tethers PLG to the cell surface and enhances its activation. Interacts (via Kringle 4 domain) with ADA; the interaction stimulates PLG activation when in complex with DPP4. Angiostatin: Interacts with ATP5F1A; the interaction inhibits most of the angiogenic effects of angiostatin. In terms of processing, N-linked glycan contains N-acetyllactosamine, sialic acid and is core fucosylated. O-linked glycans consist of Gal-GalNAc disaccharide which is modified with up to 2 sialic acid residues (microheterogeneity). In the presence of the inhibitor, the activation involves only cleavage after Arg-579, yielding two chains held together by two disulfide bonds. In the absence of the inhibitor, the activation involves additionally the removal of the activation peptide.

It localises to the secreted. It catalyses the reaction Preferential cleavage: Lys-|-Xaa &gt; Arg-|-Xaa, higher selectivity than trypsin. Converts fibrin into soluble products.. Its activity is regulated as follows. Converted into plasmin by plasminogen activators, both plasminogen and its activator being bound to fibrin. Cannot be activated with streptokinase. In terms of biological role, plasmin dissolves the fibrin of blood clots and acts as a proteolytic factor in a variety of other processes including embryonic development, tissue remodeling, tumor invasion, and inflammation. In ovulation, weakens the walls of the Graafian follicle. It activates the urokinase-type plasminogen activator, collagenases and several complement zymogens, such as C1, C4 and C5. Cleavage of fibronectin and laminin leads to cell detachment and apoptosis. Also cleaves fibrin, thrombospondin and von Willebrand factor. Its role in tissue remodeling and tumor invasion may be modulated by CSPG4. Binds to cells. This Sus scrofa (Pig) protein is Plasminogen (PLG).